Here is a 62-residue protein sequence, read N- to C-terminus: Large ribosomal subunit protein bL28 (62 aa).

This sequence belongs to the bacterial ribosomal protein bL28 family.

In Thermoanaerobacter pseudethanolicus (strain ATCC 33223 / 39E) (Clostridium thermohydrosulfuricum), this protein is Large ribosomal subunit protein bL28.